The chain runs to 261 residues: (3R)-3-hydroxyacyl-CoA dehydrogenase (261 aa).

NAD(+) is bound by residues leucine 15–isoleucine 23 and aspartate 42–leucine 43. Residue serine 60 is modified to Phosphoserine. Residue alanine 74–valine 76 participates in NAD(+) binding. Serine 156 is a binding site for substrate. The residue at position 160 (lysine 160) is an N6-succinyllysine. Tyrosine 169 functions as the Proton acceptor in the catalytic mechanism. NAD(+)-binding positions include tyrosine 169 to lysine 173 and isoleucine 202 to threonine 204. The residue at position 173 (lysine 173) is an N6-succinyllysine.

It belongs to the short-chain dehydrogenases/reductases (SDR) family. As to quaternary structure, heterotetramer with CBR4; contains two molecules of HSD17B8 and CBR4. Widely expressed, particularly abundant in prostate, placenta and kidney. Expressed at protein level in various tissues like brain, cerebellum, heart, lung, kidney, ovary, testis, adrenals and prostate.

It localises to the mitochondrion matrix. The enzyme catalyses a (3R)-3-hydroxyacyl-CoA + NAD(+) = a 3-oxoacyl-CoA + NADH + H(+). It carries out the reaction 17beta-estradiol + NAD(+) = estrone + NADH + H(+). The catalysed reaction is testosterone + NAD(+) = androst-4-ene-3,17-dione + NADH + H(+). It catalyses the reaction 17beta-hydroxy-5alpha-androstan-3-one + NAD(+) = 5alpha-androstan-3,17-dione + NADH + H(+). The protein operates within steroid biosynthesis; estrogen biosynthesis. Its pathway is lipid metabolism; fatty acid biosynthesis. It functions in the pathway lipid metabolism; mitochondrial fatty acid beta-oxidation. Its function is as follows. Required for the solubility and assembly of the heterotetramer 3-ketoacyl-[acyl carrier protein] (ACP) reductase functional complex (KAR or KAR1) that forms part of the mitochondrial fatty acid synthase (mtFAS). Alpha-subunit of the KAR complex that acts as a scaffold protein required for the stability of carbonyl reductase type-4 (CBR4, beta-subunit of the KAR complex) and for its 3-ketoacyl-ACP reductase activity, thereby participating in mitochondrial fatty acid biosynthesis. Catalyzes the NAD-dependent conversion of (3R)-3-hydroxyacyl-CoA into 3-ketoacyl-CoA (3-oxoacyl-CoA) with no chain length preference; this enzymatic activity is not needed for the KAR function. Prefers (3R)-3-hydroxyacyl-CoA over (3S)-3-hydroxyacyl-CoA and displays enzymatic activity only in the presence of NAD(+). Cooperates with enoyl-CoA hydratase 1 in mitochondria, together they constitute an alternative route to the auxiliary enzyme pathways for the breakdown of Z-PUFA (cis polyunsaturated fatty acid) enoyl-esters. NAD-dependent 17-beta-hydroxysteroid dehydrogenase with highest activity towards estradiol (17beta-estradiol or E2). Has very low activity towards testosterone and dihydrotestosterone (17beta-hydroxy-5alpha-androstan-3-one). Primarily an oxidative enzyme, it can switch to a reductive mode determined in the appropriate physiologic milieu and catalyze the reduction of estrone (E1) to form biologically active 17beta-estradiol. The chain is (3R)-3-hydroxyacyl-CoA dehydrogenase (HSD17B8) from Homo sapiens (Human).